We begin with the raw amino-acid sequence, 412 residues long: Proteasome-activating nucleotidase (412 aa).

Residues 15–73 (EDIYQYLLERITNLENRNLELREQFRQMESEKRYVETQKIRYERELRKLKSEIEQLRSP) are a coiled coil. ATP-binding positions include 197–202 (GTGKTL) and histidine 336. Residues 410–412 (MFA) are docks into pockets in the proteasome alpha-ring to cause gate opening.

Belongs to the AAA ATPase family. Homohexamer. The hexameric complex has a two-ring architecture resembling a top hat that caps the 20S proteasome core at one or both ends. Upon ATP-binding, the C-terminus of PAN interacts with the alpha-rings of the proteasome core by binding to the intersubunit pockets.

It localises to the cytoplasm. Its function is as follows. ATPase which is responsible for recognizing, binding, unfolding and translocation of substrate proteins into the archaeal 20S proteasome core particle. Is essential for opening the gate of the 20S proteasome via an interaction with its C-terminus, thereby allowing substrate entry and access to the site of proteolysis. Thus, the C-termini of the proteasomal ATPase function like a 'key in a lock' to induce gate opening and therefore regulate proteolysis. Unfolding activity requires energy from ATP hydrolysis, whereas ATP binding alone promotes ATPase-20S proteasome association which triggers gate opening, and supports translocation of unfolded substrates. This chain is Proteasome-activating nucleotidase, found in Methanoculleus marisnigri (strain ATCC 35101 / DSM 1498 / JR1).